We begin with the raw amino-acid sequence, 291 residues long: 33 kDa chaperonin (291 aa).

Disulfide bonds link Cys235/Cys237 and Cys268/Cys271.

It belongs to the HSP33 family. In terms of processing, under oxidizing conditions two disulfide bonds are formed involving the reactive cysteines. Under reducing conditions zinc is bound to the reactive cysteines and the protein is inactive.

It localises to the cytoplasm. Redox regulated molecular chaperone. Protects both thermally unfolding and oxidatively damaged proteins from irreversible aggregation. Plays an important role in the bacterial defense system toward oxidative stress. This Bacillus velezensis (strain DSM 23117 / BGSC 10A6 / LMG 26770 / FZB42) (Bacillus amyloliquefaciens subsp. plantarum) protein is 33 kDa chaperonin.